The primary structure comprises 93 residues: Acylphosphatase (93 aa).

The region spanning 6–93 (RLVAWVRGQV…RGGYEGFAIR (88 aa)) is the Acylphosphatase-like domain. Residues arginine 21 and asparagine 40 contribute to the active site.

It belongs to the acylphosphatase family.

The enzyme catalyses an acyl phosphate + H2O = a carboxylate + phosphate + H(+). In Streptomyces coelicolor (strain ATCC BAA-471 / A3(2) / M145), this protein is Acylphosphatase (acyP).